Reading from the N-terminus, the 316-residue chain is MIYILGTGGNMPTKYRQTLSIFVNYMGKGILFDAGENTQRQMRLLNLSPTQIDYIFLTHIHGDHILGLPGILLSLSNQDYNRELTIFGPKGIKEVIEKIIDSFAININFPLKIKEIGETKIDFGPFYIESIYGIHQVPVLAYSFKEKDKIKINKEKLAKYNIRSNPKLAKLKEGKSVTINGITLDPKEFTYIQKGLKFTLITDTLFREQFIDFARDSDIIFHELAFLDKDKDKAIEHYHSTISDAFRIRDESNSKLLVFIHVSPRYQGSLFEIYQYLYNKKDWIIAEDLDYIEYKKGTIIYKRNDIVLYEYAIWRS.

Zn(2+) is bound by residues His-59, His-61, Asp-63, His-64, His-135, Asp-203, and His-261. Asp-63 acts as the Proton acceptor in catalysis.

Belongs to the RNase Z family. In terms of assembly, homodimer. Zn(2+) is required as a cofactor.

It carries out the reaction Endonucleolytic cleavage of RNA, removing extra 3' nucleotides from tRNA precursor, generating 3' termini of tRNAs. A 3'-hydroxy group is left at the tRNA terminus and a 5'-phosphoryl group is left at the trailer molecule.. Functionally, zinc phosphodiesterase, which displays some tRNA 3'-processing endonuclease activity. Probably involved in tRNA maturation, by removing a 3'-trailer from precursor tRNA. The sequence is that of Ribonuclease Z from Nanoarchaeum equitans (strain Kin4-M).